The sequence spans 773 residues: Glucan endo-1,3-beta-D-glucosidase (773 aa).

The tract at residues 1 to 194 (MPPGAKVPQA…KNYFSIAVLP (194 aa)) is beta-sandwich subdomain. Residues 1–647 (MPPGAKVPQA…HWICNLDSLG (647 aa)) enclose the GH81 domain. Positions 31, 34, 35, 36, and 89 each coordinate Mg(2+). Residues 195-288 (DNTVSTLTYY…QGTSFKTVYR (94 aa)) form an alpha/beta subdomain region. The segment at 298 to 647 (DKGTYDREAL…HWICNLDSLG (350 aa)) is (alpha/beta)6 barrel subdomain. (1,3-beta-D-glucosyl)n is bound by residues Tyr-327 and Lys-331. Asp-365, Thr-368, Glu-373, and Lys-376 together coordinate Ca(2+). Asp-402 and His-406 together coordinate (1,3-beta-D-glucosyl)n. The active site involves Asp-402. Positions 454, 455, and 457 each coordinate Ca(2+). (1,3-beta-D-glucosyl)n-binding residues include Asn-477, Glu-479, and Glu-483. Residues Glu-479 and Glu-483 contribute to the active site. Mg(2+) is bound by residues Lys-527, Lys-618, Asn-619, and Trp-621. Ca(2+) is bound by residues Asp-712, Asn-714, Asp-716, Gly-717, Lys-718, Asp-723, Asp-748, Ile-749, Asn-750, Asp-752, Lys-754, and Asp-759.

The protein belongs to the glycosyl hydrolase 81 family. The cofactor is Ca(2+). It depends on Mg(2+) as a cofactor.

Its subcellular location is the secreted. It catalyses the reaction Hydrolysis of (1-&gt;3)-beta-D-glucosidic linkages in (1-&gt;3)-beta-D-glucans.. With respect to regulation, inhibited by manganese, zinc, and copper ions. Its function is as follows. Cleaves internal linkages in 1,3-beta-glucan. May contribute to plant biomass degradation. This Acetivibrio thermocellus (strain ATCC 27405 / DSM 1237 / JCM 9322 / NBRC 103400 / NCIMB 10682 / NRRL B-4536 / VPI 7372) (Clostridium thermocellum) protein is Glucan endo-1,3-beta-D-glucosidase.